A 241-amino-acid polypeptide reads, in one-letter code: MRKSVIAGNWKMHMTCADTKKYLEEFLPLIEEIPNDRKIVIAPPFTAISTFSNYTNFDYLNIASQNIHWEDKGAFTAEISPNMLIEHKVKYAIVGHSEPRKYFSESDEQINKRAVFAQSSGLTPIVCVGETLEQRERGEADRVITRQVEQGLENTDPSNLIVAYEPIWAIGTGKTCEASDANKICALIRSLIGFSDVIIQYGGSVKPNNIDEIMSMSDIDGVLVGGSSLDPISFSRIANFE.

9–11 contacts substrate; sequence NWK. The active-site Electrophile is H96. E165 acts as the Proton acceptor in catalysis. Substrate-binding positions include G171, S204, and 225 to 226; that span reads GG.

Belongs to the triosephosphate isomerase family. In terms of assembly, homodimer.

The protein localises to the cytoplasm. The enzyme catalyses D-glyceraldehyde 3-phosphate = dihydroxyacetone phosphate. It functions in the pathway carbohydrate biosynthesis; gluconeogenesis. Its pathway is carbohydrate degradation; glycolysis; D-glyceraldehyde 3-phosphate from glycerone phosphate: step 1/1. In terms of biological role, involved in the gluconeogenesis. Catalyzes stereospecifically the conversion of dihydroxyacetone phosphate (DHAP) to D-glyceraldehyde-3-phosphate (G3P). The polypeptide is Triosephosphate isomerase (Prochlorococcus marinus subsp. pastoris (strain CCMP1986 / NIES-2087 / MED4)).